Consider the following 172-residue polypeptide: Large ribosomal subunit protein uL10 (172 aa).

Belongs to the universal ribosomal protein uL10 family. Part of the ribosomal stalk of the 50S ribosomal subunit. The N-terminus interacts with L11 and the large rRNA to form the base of the stalk. The C-terminus forms an elongated spine to which L12 dimers bind in a sequential fashion forming a multimeric L10(L12)X complex.

In terms of biological role, forms part of the ribosomal stalk, playing a central role in the interaction of the ribosome with GTP-bound translation factors. This chain is Large ribosomal subunit protein uL10, found in Lawsonia intracellularis (strain PHE/MN1-00).